We begin with the raw amino-acid sequence, 298 residues long: Cyclin-D4-2 (298 aa).

This sequence belongs to the cyclin family. Cyclin D subfamily. As to quaternary structure, interacts with CDKA-1 to form a kinase complex.

Functionally, may promote cell division. The sequence is that of Cyclin-D4-2 (CYCD4-2) from Arabidopsis thaliana (Mouse-ear cress).